Reading from the N-terminus, the 423-residue chain is Large ribosomal subunit protein mL37 (423 aa).

The N-terminal 29 residues, 1-29 (MALASGPALRALAGSGRLGLGGYGTPKRG), are a transit peptide targeting the mitochondrion.

The protein belongs to the mitochondrion-specific ribosomal protein mL37 family. In terms of assembly, component of the mitochondrial ribosome large subunit (39S) which comprises a 16S rRNA and about 50 distinct proteins.

Its subcellular location is the mitochondrion. This chain is Large ribosomal subunit protein mL37 (Mrpl37), found in Mus musculus (Mouse).